A 488-amino-acid chain; its full sequence is Regulatory protein ViaA (488 aa).

The protein belongs to the ViaA family. As to quaternary structure, homodimer. Interacts with RavA.

It is found in the cytoplasm. Its function is as follows. Component of the RavA-ViaA chaperone complex, which may act on the membrane to optimize the function of some of the respiratory chains. ViaA stimulates the ATPase activity of RavA. The sequence is that of Regulatory protein ViaA from Yersinia enterocolitica serotype O:8 / biotype 1B (strain NCTC 13174 / 8081).